We begin with the raw amino-acid sequence, 147 residues long: UPF0306 protein YhbP (147 aa).

Belongs to the UPF0306 family.

In Escherichia coli O6:K15:H31 (strain 536 / UPEC), this protein is UPF0306 protein YhbP.